The following is a 644-amino-acid chain: Acetolactate synthase 1, chloroplastic (644 aa).

A chloroplast-targeting transit peptide spans 1–43 (MATTAAAAAAALSAAATAKTGRKNHQRHHVLPARGRVGAAAVR). The tract at residues 47 to 67 (VSPVTPPSPAPPATPLRPWGP) is disordered. Pro residues predominate over residues 50 to 61 (VTPPSPAPPATP). Residue E118 coordinates thiamine diphosphate. Cysteines 138 and 284 form a disulfide. FAD contacts are provided by residues R220, 326 to 347 (HGTV…FGVR), and 369 to 388 (DIDP…ICAD). Residues 461–541 (QHQMWAAQYY…VKVMVLNNQH (81 aa)) form a thiamine pyrophosphate binding region. D512 and N539 together coordinate Mg(2+).

Belongs to the TPP enzyme family. Requires Mg(2+) as cofactor. Thiamine diphosphate is required as a cofactor.

The protein resides in the plastid. The protein localises to the chloroplast. The enzyme catalyses 2 pyruvate + H(+) = (2S)-2-acetolactate + CO2. It participates in amino-acid biosynthesis; L-isoleucine biosynthesis; L-isoleucine from 2-oxobutanoate: step 1/4. Its pathway is amino-acid biosynthesis; L-valine biosynthesis; L-valine from pyruvate: step 1/4. This is Acetolactate synthase 1, chloroplastic (ALS1) from Oryza sativa subsp. japonica (Rice).